The primary structure comprises 637 residues: Chaperone protein HtpG (637 aa).

The segment at 1-330 (MATAPASHAF…TEDLPLNISR (330 aa)) is a; substrate-binding. The interval 331-551 (ETLQENVVVR…GGASTSSMDR (221 aa)) is b. The c stretch occupies residues 552–637 (LLRVLHKDES…GDWYKAVRGL (86 aa)).

This sequence belongs to the heat shock protein 90 family. In terms of assembly, homodimer.

Its subcellular location is the cytoplasm. Its function is as follows. Molecular chaperone. Has ATPase activity. This is Chaperone protein HtpG from Nitratidesulfovibrio vulgaris (strain ATCC 29579 / DSM 644 / CCUG 34227 / NCIMB 8303 / VKM B-1760 / Hildenborough) (Desulfovibrio vulgaris).